We begin with the raw amino-acid sequence, 194 residues long: uncharacterized protein (194 aa).

An N-terminal signal peptide occupies residues 1–22 (MNKVTKTAIAGLLALFAGNAAA). Cysteine 38 and cysteine 78 are joined by a disulfide.

The protein belongs to the fimbrial protein family.

The protein localises to the fimbrium. Its function is as follows. Part of the yraHIJK fimbrial operon. Could contribute to adhesion to various surfaces in specific environmental niches. Increases adhesion to eukaryotic T24 bladder epithelial cells in the absence of fim operon. This is an uncharacterized protein from Escherichia coli (strain K12).